Reading from the N-terminus, the 813-residue chain is LPS-assembly protein LptD (813 aa).

The first 22 residues, 1-22 (MRRALRLLPLPLSIAICLPAMA), serve as a signal peptide directing secretion.

It belongs to the LptD family. As to quaternary structure, component of the lipopolysaccharide transport and assembly complex. Interacts with LptE and LptA.

Its subcellular location is the cell outer membrane. Its function is as follows. Together with LptE, is involved in the assembly of lipopolysaccharide (LPS) at the surface of the outer membrane. The sequence is that of LPS-assembly protein LptD from Xanthomonas axonopodis pv. citri (strain 306).